We begin with the raw amino-acid sequence, 361 residues long: Queuine tRNA-ribosyltransferase (361 aa).

Asp-92 serves as the catalytic Proton acceptor. Substrate contacts are provided by residues 92–96 (DSGGF), Asp-146, Gln-189, and Gly-216. Positions 247–253 (GVGKPAD) are RNA binding. The active-site Nucleophile is Asp-266. The RNA binding; important for wobble base 34 recognition stretch occupies residues 271-275 (TRSGR). Zn(2+)-binding residues include Cys-304, Cys-306, Cys-309, and His-335.

Belongs to the queuine tRNA-ribosyltransferase family. In terms of assembly, homodimer. Within each dimer, one monomer is responsible for RNA recognition and catalysis, while the other monomer binds to the replacement base PreQ1. It depends on Zn(2+) as a cofactor.

The catalysed reaction is 7-aminomethyl-7-carbaguanine + guanosine(34) in tRNA = 7-aminomethyl-7-carbaguanosine(34) in tRNA + guanine. The protein operates within tRNA modification; tRNA-queuosine biosynthesis. In terms of biological role, catalyzes the base-exchange of a guanine (G) residue with the queuine precursor 7-aminomethyl-7-deazaguanine (PreQ1) at position 34 (anticodon wobble position) in tRNAs with GU(N) anticodons (tRNA-Asp, -Asn, -His and -Tyr). Catalysis occurs through a double-displacement mechanism. The nucleophile active site attacks the C1' of nucleotide 34 to detach the guanine base from the RNA, forming a covalent enzyme-RNA intermediate. The proton acceptor active site deprotonates the incoming PreQ1, allowing a nucleophilic attack on the C1' of the ribose to form the product. After dissociation, two additional enzymatic reactions on the tRNA convert PreQ1 to queuine (Q), resulting in the hypermodified nucleoside queuosine (7-(((4,5-cis-dihydroxy-2-cyclopenten-1-yl)amino)methyl)-7-deazaguanosine). The polypeptide is Queuine tRNA-ribosyltransferase (Rickettsia bellii (strain OSU 85-389)).